The primary structure comprises 336 residues: Ketoreductase adrE (336 aa).

Tyrosine 171 contacts NADP(+).

The protein belongs to the NAD(P)-dependent epimerase/dehydratase family. Dihydroflavonol-4-reductase subfamily.

It functions in the pathway secondary metabolite biosynthesis; terpenoid biosynthesis. In terms of biological role, ketoreductase; part of the gene cluster that mediates the biosynthesis of andrastins, meroterpenoid compounds that exhibit inhibitory activity against ras farnesyltransferase, suggesting that they could be promising leads for antitumor agents. The first step of the pathway is the synthesis of 3,5-dimethylorsellinic acid (DMOA) by the polyketide synthase adrD via condensation of one acetyl-CoA starter unit with 3 malonyl-CoA units and 2 methylations. DMAO is then converted to farnesyl-DMAO by the prenyltransferase adrG. The methyltransferase adrK catalyzes the methylation of the carboxyl group of farnesyl-DMAO to farnesyl-DMAO methyl ester which is further converted to epoxyfarnesyl-DMAO methyl ester by the FAD-dependent monooxygenase adrH. The terpene cyclase adrI then catalyzes the carbon skeletal rearrangement to generate the andrastin E, the first compound in the pathway having the andrastin scaffold, with the tetracyclic ring system. The post-cyclization tailoring enzymes adrF, adrE, adrJ, and adrA, are involved in the conversion of andrastin E into andrastin A. The short chain dehydrogenase adrF is responsible for the oxidation of the C-3 a hydroxyl group of andrastin E to yield the corresponding ketone, andrastin D. The ketoreductase adrE stereoselectively reduces the carbonyl moiety to reverse the stereochemistry of the C-3 position to yield andrastin F. The acetyltransferase adrJ is the acetyltransferase that attaches the acetyl group to the C-3 hydroxyl group of andrastin F to yield andrastin C. Finally, the cytochrome P450 monooxygenase adrA catalyzes two sequential oxidation reactions of the C-23 methyl group, to generate the corresponding alcohol andrastin B, and aldehyde andrastin A. The chain is Ketoreductase adrE from Penicillium roqueforti.